The following is a 195-amino-acid chain: Probable prefoldin subunit 3 (195 aa).

The protein belongs to the prefoldin subunit alpha family. Heterohexamer of two PFD-alpha type and four PFD-beta type subunits.

Functionally, binds specifically to cytosolic chaperonin (c-CPN) and transfers target proteins to it. Binds to nascent polypeptide chain and promotes folding in an environment in which there are many competing pathways for nonnative proteins. In Dictyostelium discoideum (Social amoeba), this protein is Probable prefoldin subunit 3 (pfdn3).